A 302-amino-acid chain; its full sequence is Acidic endochitinase (302 aa).

The N-terminal stretch at 1-30 (MTNMTLRKHVIYFLFFISCSLSKPSDASRG) is a signal peptide. Positions 31-302 (GIAIYWGQNG…GYSSSILASV (272 aa)) constitute a GH18 domain. Cystine bridges form between C49/C96 and C79/C86. E156 functions as the Proton donor in the catalytic mechanism. C188 and C217 are disulfide-bonded.

Belongs to the glycosyl hydrolase 18 family. Chitinase class III subfamily.

Its subcellular location is the secreted. The protein localises to the extracellular space. The catalysed reaction is Random endo-hydrolysis of N-acetyl-beta-D-glucosaminide (1-&gt;4)-beta-linkages in chitin and chitodextrins.. In terms of biological role, this protein functions as a defense against chitin containing fungal pathogens. In Arabidopsis thaliana (Mouse-ear cress), this protein is Acidic endochitinase (CHIB1).